We begin with the raw amino-acid sequence, 111 residues long: Ribosome-binding factor A (111 aa).

It belongs to the RbfA family. Monomer. Binds 30S ribosomal subunits, but not 50S ribosomal subunits or 70S ribosomes.

The protein localises to the cytoplasm. Functionally, one of several proteins that assist in the late maturation steps of the functional core of the 30S ribosomal subunit. Associates with free 30S ribosomal subunits (but not with 30S subunits that are part of 70S ribosomes or polysomes). Required for efficient processing of 16S rRNA. May interact with the 5'-terminal helix region of 16S rRNA. The protein is Ribosome-binding factor A of Helicobacter pylori (strain ATCC 700392 / 26695) (Campylobacter pylori).